Reading from the N-terminus, the 882-residue chain is Homeobox-leucine zipper protein ROC3 (882 aa).

A disordered region spans residues 104 to 144 (DVDDDHKPQHSGHDQPPDAAQPSGAAGGNAKKKRYHRHTAH). The span at 107-119 (DDHKPQHSGHDQP) shows a compositional bias: basic and acidic residues. Residues 133–143 (AKKKRYHRHTA) are compositionally biased toward basic residues. A DNA-binding region (homeobox) is located at residues 134 to 193 (KKKRYHRHTAHQIQQMEALFKECPHPDDKQRLKLSQELGLKPRQVKFWFQNRRTQMKAQQ). A coiled-coil region spans residues 200–263 (ILRAENENLK…LDRLACIATR (64 aa)). In terms of domain architecture, START spans 340-584 (QEQDKQLVVD…LQRQCERLAS (245 aa)). The span at 782–816 (AAAPTISSSTTTTTGNGNGETSSTPPRNSSSNNNN) shows a compositional bias: low complexity. Positions 782–820 (AAAPTISSSTTTTTGNGNGETSSTPPRNSSSNNNNADEL) are disordered.

Belongs to the HD-ZIP homeobox family. Class IV subfamily.

It localises to the nucleus. Functionally, probable transcription factor. The sequence is that of Homeobox-leucine zipper protein ROC3 (ROC3) from Oryza sativa subsp. japonica (Rice).